A 649-amino-acid polypeptide reads, in one-letter code: Glycerol-3-phosphate dehydrogenase, mitochondrial (649 aa).

69–97 (DVLIIGGGATGTGCALDAATRGLNVALVE) contacts FAD.

The protein belongs to the FAD-dependent glycerol-3-phosphate dehydrogenase family. The cofactor is FAD.

It localises to the mitochondrion inner membrane. Its subcellular location is the mitochondrion intermembrane space. It catalyses the reaction a quinone + sn-glycerol 3-phosphate = dihydroxyacetone phosphate + a quinol. It participates in polyol metabolism; glycerol degradation via glycerol kinase pathway; glycerone phosphate from sn-glycerol 3-phosphate (anaerobic route): step 1/1. The sequence is that of Glycerol-3-phosphate dehydrogenase, mitochondrial (GUT2) from Saccharomyces cerevisiae (strain ATCC 204508 / S288c) (Baker's yeast).